Reading from the N-terminus, the 452-residue chain is Protein FAM81B (452 aa).

2 stretches are compositionally biased toward polar residues: residues 1–11 and 38–55; these read MQLQFLGTLAS and IMSSDTNVNKSASPTATA. The tract at residues 1 to 85 is disordered; the sequence is MQLQFLGTLA…KVRLSPAKMS (85 aa). 2 coiled-coil regions span residues 164–192 and 329–452; these read IQTITSIVKKLSQNIEILEDQIRARDQAA and LGHI…LQEV.

Belongs to the FAM81 family.

The sequence is that of Protein FAM81B (FAM81B) from Homo sapiens (Human).